A 380-amino-acid chain; its full sequence is MEPAIKYRLIKTDKHTGARLGEIITPHGTFPTPIFMPVGTQATVKAMSPEELEDLGADIILSNTYHLWVRPGEDIVKEGGGLHQFMNWKKGILTDSGGFQVFSLAKLRDITEEGVHFKNELNGANMFLSPEKAIQIENDLGPDIMMSFDECPPYFESYDYVKHSVERTSRWAERGLKAHRNPETQGLFGIIQGAGFEDLRRQSAKDLVSMDFPGYSIGGLSVGESKEEMNRVLDFTTQLIPENKPRYLMGVGSPDALIDGVLRGVDMFDCVLPTRIARNGTCMTSHGRLVVKNAKYARDFTPIDDNCQCYTCRNYTRAYIRHLIKTDETFGLRLTSIHNVYFLVHLMKDVRQAIMDDNLLEFRQNFFEEYGYNKENSKNF.

The Proton acceptor role is filled by Asp-95. Substrate contacts are provided by residues 95 to 99, Asp-149, Gln-192, and Gly-219; that span reads DSGGF. The tract at residues 250 to 256 is RNA binding; that stretch reads GVGSPDA. Residue Asp-269 is the Nucleophile of the active site. Residues 274 to 278 form an RNA binding; important for wobble base 34 recognition region; the sequence is TRIAR. Positions 307, 309, 312, and 338 each coordinate Zn(2+).

Belongs to the queuine tRNA-ribosyltransferase family. In terms of assembly, homodimer. Within each dimer, one monomer is responsible for RNA recognition and catalysis, while the other monomer binds to the replacement base PreQ1. The cofactor is Zn(2+).

The enzyme catalyses 7-aminomethyl-7-carbaguanine + guanosine(34) in tRNA = 7-aminomethyl-7-carbaguanosine(34) in tRNA + guanine. It participates in tRNA modification; tRNA-queuosine biosynthesis. Functionally, catalyzes the base-exchange of a guanine (G) residue with the queuine precursor 7-aminomethyl-7-deazaguanine (PreQ1) at position 34 (anticodon wobble position) in tRNAs with GU(N) anticodons (tRNA-Asp, -Asn, -His and -Tyr). Catalysis occurs through a double-displacement mechanism. The nucleophile active site attacks the C1' of nucleotide 34 to detach the guanine base from the RNA, forming a covalent enzyme-RNA intermediate. The proton acceptor active site deprotonates the incoming PreQ1, allowing a nucleophilic attack on the C1' of the ribose to form the product. After dissociation, two additional enzymatic reactions on the tRNA convert PreQ1 to queuine (Q), resulting in the hypermodified nucleoside queuosine (7-(((4,5-cis-dihydroxy-2-cyclopenten-1-yl)amino)methyl)-7-deazaguanosine). In Pediococcus pentosaceus (strain ATCC 25745 / CCUG 21536 / LMG 10740 / 183-1w), this protein is Queuine tRNA-ribosyltransferase.